The following is a 78-amino-acid chain: Large ribosomal subunit protein bL28 (78 aa).

It belongs to the bacterial ribosomal protein bL28 family.

In Microcystis aeruginosa (strain NIES-843 / IAM M-2473), this protein is Large ribosomal subunit protein bL28.